Reading from the N-terminus, the 274-residue chain is Phosphatidylglycerol--prolipoprotein diacylglyceryl transferase (274 aa).

4 consecutive transmembrane segments (helical) span residues 16-36 (VGLHLSWYGIFFSLGIFLSSF), 62-82 (FALGALLVIVIGARAFYVLFY), 94-114 (IIKIWKGGLSSHGAIIALVIW), and 129-149 (LSVTYICDICGAVFGVAALLI). A 1,2-diacyl-sn-glycero-3-phospho-(1'-sn-glycerol) is bound at residue Arg150. 3 consecutive transmembrane segments (helical) span residues 184 to 204 (VQLYEGVSYLLLSLVLYWLCY), 213 to 233 (GYSAAGALIGVASIRFCAEFF), and 247 to 267 (LTIGQWLSIPMVFLGIGILWI).

The protein belongs to the Lgt family.

The protein resides in the cell inner membrane. It catalyses the reaction L-cysteinyl-[prolipoprotein] + a 1,2-diacyl-sn-glycero-3-phospho-(1'-sn-glycerol) = an S-1,2-diacyl-sn-glyceryl-L-cysteinyl-[prolipoprotein] + sn-glycerol 1-phosphate + H(+). It participates in protein modification; lipoprotein biosynthesis (diacylglyceryl transfer). Catalyzes the transfer of the diacylglyceryl group from phosphatidylglycerol to the sulfhydryl group of the N-terminal cysteine of a prolipoprotein, the first step in the formation of mature lipoproteins. The sequence is that of Phosphatidylglycerol--prolipoprotein diacylglyceryl transferase from Chlamydia muridarum (strain MoPn / Nigg).